A 549-amino-acid chain; its full sequence is Putative lipase ATG15 (549 aa).

The Cytoplasmic segment spans residues 1–19; the sequence is MKQDLYKESSPPPSTTKSK. Residues 20–42 form a helical; Signal-anchor for type II membrane protein membrane-spanning segment; that stretch reads GLYVIVAALVTTAIYLLYSQGYS. Residues 43 to 549 are Lumenal-facing; sequence NTHGEKDMPS…SHTVTHVTMA (507 aa). N-linked (GlcNAc...) asparagine glycosylation is found at Asn-204 and Asn-315. Ser-331 serves as the catalytic Charge relay system. Asn-448 carries N-linked (GlcNAc...) asparagine glycosylation. A disordered region spans residues 474 to 510; sequence DDDDKDKKKKKKTSTSSSVVSKTKTSTSSTVATNTMP. A compositionally biased stretch (low complexity) spans 487–504; sequence STSSSVVSKTKTSTSSTV.

This sequence belongs to the AB hydrolase superfamily. Lipase family. As to quaternary structure, binds to both phosphatidylinositol (PI) and phosphatidylinositol 3,5-bisphosphate (PIP2).

It is found in the endosome. It localises to the multivesicular body membrane. The protein resides in the prevacuolar compartment membrane. It catalyses the reaction a triacylglycerol + H2O = a diacylglycerol + a fatty acid + H(+). Its function is as follows. Lipase which is essential for lysis of subvacuolar cytoplasm to vacuole targeted bodies and intravacuolar autophagic bodies. Involved in the lysis of intravacuolar multivesicular body (MVB) vesicles. The intravacuolar membrane disintegration by ATG15 is critical to life span extension. In Yarrowia lipolytica (strain CLIB 122 / E 150) (Yeast), this protein is Putative lipase ATG15 (ATG15).